Consider the following 178-residue polypeptide: DNA-directed RNA polymerase V subunit 7 (178 aa).

Belongs to the eukaryotic RPB7/RPC8 RNA polymerase subunit family. In terms of assembly, component of the RNA polymerase V complex.

The protein localises to the nucleus. DNA-dependent RNA polymerase catalyzes the transcription of DNA into RNA using the four ribonucleoside triphosphates as substrates. Component of RNA polymerase V involved in RNA-directed DNA methylation-dependent (RdDM) silencing of endogenous repeated sequences, including transposable elements. The protein is DNA-directed RNA polymerase V subunit 7 (NRPE7) of Arabidopsis thaliana (Mouse-ear cress).